The sequence spans 832 residues: Beta-galactosidase (832 aa).

A signal peptide spans Met-1 to Ala-25. Glu-183 acts as the Proton donor in catalysis. The Nucleophile role is filled by Glu-252. The 92-residue stretch at Ala-741–Glu-832 folds into the SUEL-type lectin domain.

It belongs to the glycosyl hydrolase 35 family.

It localises to the secreted. Its subcellular location is the extracellular space. The protein resides in the apoplast. The catalysed reaction is Hydrolysis of terminal non-reducing beta-D-galactose residues in beta-D-galactosides.. The protein is Beta-galactosidase of Asparagus officinalis (Garden asparagus).